The chain runs to 462 residues: ATP synthase subunit beta (462 aa).

152–159 (GGAGVGKT) lines the ATP pocket.

The protein belongs to the ATPase alpha/beta chains family. As to quaternary structure, F-type ATPases have 2 components, CF(1) - the catalytic core - and CF(0) - the membrane proton channel. CF(1) has five subunits: alpha(3), beta(3), gamma(1), delta(1), epsilon(1). CF(0) has three main subunits: a(1), b(2) and c(9-12). The alpha and beta chains form an alternating ring which encloses part of the gamma chain. CF(1) is attached to CF(0) by a central stalk formed by the gamma and epsilon chains, while a peripheral stalk is formed by the delta and b chains.

It is found in the cell inner membrane. It catalyses the reaction ATP + H2O + 4 H(+)(in) = ADP + phosphate + 5 H(+)(out). Its function is as follows. Produces ATP from ADP in the presence of a proton gradient across the membrane. The catalytic sites are hosted primarily by the beta subunits. The polypeptide is ATP synthase subunit beta (Blochmanniella pennsylvanica (strain BPEN)).